A 200-amino-acid chain; its full sequence is Large ribosomal subunit protein uL4 (200 aa).

Positions Gln-45 to Thr-64 are disordered.

Belongs to the universal ribosomal protein uL4 family. In terms of assembly, part of the 50S ribosomal subunit.

Functionally, one of the primary rRNA binding proteins, this protein initially binds near the 5'-end of the 23S rRNA. It is important during the early stages of 50S assembly. It makes multiple contacts with different domains of the 23S rRNA in the assembled 50S subunit and ribosome. Forms part of the polypeptide exit tunnel. The chain is Large ribosomal subunit protein uL4 from Psychrobacter cryohalolentis (strain ATCC BAA-1226 / DSM 17306 / VKM B-2378 / K5).